The primary structure comprises 693 residues: Zinc finger BED domain-containing protein 5 (693 aa).

The BED-type zinc finger occupies 108-164 (RKYDESYLSFGFTYFGNRDAPHAQCVLCKKILSNSSLAPSKLRRHLETKHAAYKDKD). Positions 132, 135, 152, and 157 each coordinate Zn(2+).

The polypeptide is Zinc finger BED domain-containing protein 5 (ZBED5) (Homo sapiens (Human)).